A 2201-amino-acid polypeptide reads, in one-letter code: Tenascin (2201 aa).

An N-terminal signal peptide occupies residues 1 to 22 (MGAMTQLLAGVFLAFLALATEG). An N-linked (GlcNAc...) asparagine glycan is attached at Asn-38. Ser-65 and Ser-70 each carry phosphoserine. At Ser-72 the chain carries Phosphoserine; by FAM20C. The O-linked (Xyl...) (chondroitin sulfate) serine glycan is linked to Ser-72. A coiled-coil region spans residues 118-145 (DVKELLSRLEELENLVSSLREQCTAGAG). 2 N-linked (GlcNAc...) asparagine glycosylation sites follow: Asn-166 and Asn-184. In terms of domain architecture, EGF-like 1; incomplete spans 174–186 (CVCEPGWKGPNCS). 14 EGF-like domains span residues 186 to 217 (SEPE…EDCS), 217 to 248 (SQLA…ADCS), 248 to 280 (SREI…DDCN), 280 to 311 (NKPL…EDCS), 311 to 342 (SELI…EDCG), 342 to 373 (GKPT…VDCS), 373 to 404 (SEKR…ADCG), 404 to 435 (GELK…EDCS), 435 to 466 (SQLR…YDCS), 466 to 497 (SDMS…EDCR), 497 to 528 (RDRQ…PDCA), 528 to 559 (AELS…KDCK), 559 to 590 (KEQR…LDCG), and 590 to 621 (GQHS…EDCS). Disulfide bonds link Cys-190–Cys-200, Cys-194–Cys-205, Cys-207–Cys-216, Cys-221–Cys-231, Cys-225–Cys-236, Cys-238–Cys-247, Cys-252–Cys-263, Cys-256–Cys-268, Cys-270–Cys-279, Cys-284–Cys-294, Cys-288–Cys-299, Cys-301–Cys-310, Cys-315–Cys-325, Cys-319–Cys-330, Cys-332–Cys-341, Cys-346–Cys-356, Cys-350–Cys-361, Cys-363–Cys-372, Cys-377–Cys-387, Cys-381–Cys-392, Cys-394–Cys-403, Cys-408–Cys-418, Cys-412–Cys-423, Cys-425–Cys-434, Cys-439–Cys-449, Cys-443–Cys-454, Cys-456–Cys-465, Cys-470–Cys-480, Cys-474–Cys-485, Cys-487–Cys-496, Cys-501–Cys-511, Cys-505–Cys-516, Cys-518–Cys-527, Cys-532–Cys-542, Cys-536–Cys-547, Cys-549–Cys-558, Cys-563–Cys-573, Cys-567–Cys-578, Cys-580–Cys-589, Cys-594–Cys-604, Cys-598–Cys-609, and Cys-611–Cys-620. N-linked (GlcNAc...) asparagine glycosylation is present at Asn-327. 15 consecutive Fibronectin type-III domains span residues 625–715 (PPKD…LPAP), 716–804 (EGLK…TRLD), 805–894 (APSQ…TGLD), 895–990 (APRN…TPKD), 991–1075 (LQVS…EQAP), 1076–1165 (ELEN…TGET), 1167–1256 (NLGE…TEEV), 1258–1350 (DMGN…LPQL), 1351–1439 (GDLA…AKEP), 1440–1531 (EIGN…ALPL), 1533–1621 (ENLT…EAEP), 1622–1711 (EVDN…TAMG), 1712–1801 (SPKE…ALDG), 1802–1888 (PSGL…TDLD), and 1889–1977 (SPRD…IGLL). N-linked (GlcNAc...) asparagine glycosylation occurs at Asn-788. Position 905 is a phosphothreonine (Thr-905). 16 N-linked (GlcNAc...) asparagine glycosylation sites follow: Asn-1018, Asn-1034, Asn-1079, Asn-1093, Asn-1119, Asn-1184, Asn-1210, Asn-1261, Asn-1275, Asn-1301, Asn-1366, Asn-1392, Asn-1445, Asn-1455, Asn-1485, and Asn-1534. Asn-1809 carries N-linked (GlcNAc...) asparagine glycosylation. A Fibrinogen C-terminal domain is found at 1975–2190 (GLLYPFPKDC…FAEMKLRPSN (216 aa)). Asn-2162 carries an N-linked (GlcNAc...) asparagine glycan.

Belongs to the tenascin family. In terms of assembly, homohexamer; disulfide-linked. A homotrimer may be formed in the triple coiled-coil region and may be stabilized by disulfide rings at both ends. Two of such half-hexabrachions may be disulfide linked within the central globule. Interacts with CSPG4. Interacts (via the 3rd fibronectin type-III domain) with integrin ITGA9:ITGB1. As to expression, detected in fibroblasts (at protein level).

Its subcellular location is the secreted. The protein localises to the extracellular space. It localises to the extracellular matrix. Extracellular matrix protein implicated in guidance of migrating neurons as well as axons during development, synaptic plasticity as well as neuronal regeneration. Promotes neurite outgrowth from cortical neurons grown on a monolayer of astrocytes. Ligand for integrins alpha-8/beta-1, alpha-9/beta-1, alpha-V/beta-3 and alpha-V/beta-6. In tumors, stimulates angiogenesis by elongation, migration and sprouting of endothelial cells. This chain is Tenascin (TNC), found in Homo sapiens (Human).